Here is a 239-residue protein sequence, read N- to C-terminus: UDP-2,3-diacylglucosamine hydrolase (239 aa).

Mn(2+)-binding residues include aspartate 8, histidine 10, aspartate 41, asparagine 78, and histidine 113. 78–79 (NR) contributes to the substrate binding site. Residues aspartate 121, serine 159, asparagine 163, lysine 166, and histidine 194 each contribute to the substrate site. Mn(2+)-binding residues include histidine 194 and histidine 196.

The protein belongs to the LpxH family. Requires Mn(2+) as cofactor.

It is found in the cell inner membrane. It catalyses the reaction UDP-2-N,3-O-bis[(3R)-3-hydroxytetradecanoyl]-alpha-D-glucosamine + H2O = 2-N,3-O-bis[(3R)-3-hydroxytetradecanoyl]-alpha-D-glucosaminyl 1-phosphate + UMP + 2 H(+). It participates in glycolipid biosynthesis; lipid IV(A) biosynthesis; lipid IV(A) from (3R)-3-hydroxytetradecanoyl-[acyl-carrier-protein] and UDP-N-acetyl-alpha-D-glucosamine: step 4/6. Hydrolyzes the pyrophosphate bond of UDP-2,3-diacylglucosamine to yield 2,3-diacylglucosamine 1-phosphate (lipid X) and UMP by catalyzing the attack of water at the alpha-P atom. Involved in the biosynthesis of lipid A, a phosphorylated glycolipid that anchors the lipopolysaccharide to the outer membrane of the cell. This is UDP-2,3-diacylglucosamine hydrolase from Shewanella sp. (strain MR-4).